We begin with the raw amino-acid sequence, 354 residues long: Protein ECM8 (354 aa).

May be involved in cell wall organization and biogenesis. The protein is Protein ECM8 (ECM8) of Saccharomyces cerevisiae (strain ATCC 204508 / S288c) (Baker's yeast).